Reading from the N-terminus, the 518-residue chain is 2-isopropylmalate synthase (518 aa).

Positions Val5–Tyr267 constitute a Pyruvate carboxyltransferase domain. Mn(2+) contacts are provided by Asp14, His202, His204, and Asn238. The segment at Ser392–Asn518 is regulatory domain.

This sequence belongs to the alpha-IPM synthase/homocitrate synthase family. LeuA type 1 subfamily. In terms of assembly, homodimer. Requires Mn(2+) as cofactor.

It localises to the cytoplasm. It carries out the reaction 3-methyl-2-oxobutanoate + acetyl-CoA + H2O = (2S)-2-isopropylmalate + CoA + H(+). Its pathway is amino-acid biosynthesis; L-leucine biosynthesis; L-leucine from 3-methyl-2-oxobutanoate: step 1/4. Catalyzes the condensation of the acetyl group of acetyl-CoA with 3-methyl-2-oxobutanoate (2-ketoisovalerate) to form 3-carboxy-3-hydroxy-4-methylpentanoate (2-isopropylmalate). This Buchnera aphidicola subsp. Schizaphis graminum (strain Sg) protein is 2-isopropylmalate synthase.